Reading from the N-terminus, the 547-residue chain is Chaperonin GroEL (547 aa).

ATP contacts are provided by residues 30-33 (TLGP), Lys51, 87-91 (DGTTT), Gly415, 479-481 (NAA), and Asp495.

This sequence belongs to the chaperonin (HSP60) family. Forms a cylinder of 14 subunits composed of two heptameric rings stacked back-to-back. Interacts with the co-chaperonin GroES.

It is found in the cytoplasm. The catalysed reaction is ATP + H2O + a folded polypeptide = ADP + phosphate + an unfolded polypeptide.. Together with its co-chaperonin GroES, plays an essential role in assisting protein folding. The GroEL-GroES system forms a nano-cage that allows encapsulation of the non-native substrate proteins and provides a physical environment optimized to promote and accelerate protein folding. This chain is Chaperonin GroEL, found in Pseudomonas putida (strain GB-1).